Reading from the N-terminus, the 327-residue chain is Biotin synthase (327 aa).

Residues 42–268 (NKVQKASLLS…VMPASTVRLS (227 aa)) enclose the Radical SAM core domain. Positions 57, 61, and 64 each coordinate [4Fe-4S] cluster. [2Fe-2S] cluster-binding residues include Cys-102, Cys-134, Cys-194, and Arg-266.

It belongs to the radical SAM superfamily. Biotin synthase family. In terms of assembly, homodimer. [4Fe-4S] cluster serves as cofactor. The cofactor is [2Fe-2S] cluster.

It catalyses the reaction (4R,5S)-dethiobiotin + (sulfur carrier)-SH + 2 reduced [2Fe-2S]-[ferredoxin] + 2 S-adenosyl-L-methionine = (sulfur carrier)-H + biotin + 2 5'-deoxyadenosine + 2 L-methionine + 2 oxidized [2Fe-2S]-[ferredoxin]. Its pathway is cofactor biosynthesis; biotin biosynthesis; biotin from 7,8-diaminononanoate: step 2/2. Its function is as follows. Catalyzes the conversion of dethiobiotin (DTB) to biotin by the insertion of a sulfur atom into dethiobiotin via a radical-based mechanism. This is Biotin synthase from Rhizobium rhizogenes (strain K84 / ATCC BAA-868) (Agrobacterium radiobacter).